A 456-amino-acid polypeptide reads, in one-letter code: Nitrogenase molybdenum-iron protein beta chain (456 aa).

4 residues coordinate [8Fe-7S] cluster: Cys-23, Cys-48, Cys-106, and Ser-141.

Belongs to the NifD/NifK/NifE/NifN family. In terms of assembly, tetramer of two alpha and two beta chains. Forms complex with the iron protein (nitrogenase component 2). Requires [8Fe-7S] cluster as cofactor.

The enzyme catalyses N2 + 8 reduced [2Fe-2S]-[ferredoxin] + 16 ATP + 16 H2O = H2 + 8 oxidized [2Fe-2S]-[ferredoxin] + 2 NH4(+) + 16 ADP + 16 phosphate + 6 H(+). Its function is as follows. This molybdenum-iron protein is part of the nitrogenase complex that catalyzes the key enzymatic reactions in nitrogen fixation. The polypeptide is Nitrogenase molybdenum-iron protein beta chain (nifK2) (Methanosarcina barkeri).